The chain runs to 186 residues: ADP-ribosylation factor-like protein 6 (186 aa).

Gly2 carries N-myristoyl glycine lipidation. GTP-binding positions include 24-31, Thr50, 69-73, Gly72, 130-133, and Ala164; these read GLDNSGKT, DMSGQ, and NKMD. Thr50 is a binding site for Mg(2+).

Belongs to the small GTPase superfamily. Arf family. In terms of assembly, interacts with SEC61B, ARL6IP1, ARL6IP2, ARL6IP3, ARL6IP4 ARL6IP5 and ARL6IP6. Interacts (GTP-bound form) with the BBSome a complex that contains BBS1, BBS2, BBS4, BBS5, BBS7, BBS8/TTC8, BBS9 and BBIP10. Interacts (GTP-free form) with IFT27. In terms of tissue distribution, most abundant in brain and kidney. Expressed in heart and eye. Isoform 2 is expressed only in the retina.

Its subcellular location is the cell projection. The protein localises to the cilium membrane. The protein resides in the cytoplasm. It is found in the cytoskeleton. It localises to the cilium axoneme. Its subcellular location is the cilium basal body. Involved in membrane protein trafficking at the base of the ciliary organelle. Mediates recruitment onto plasma membrane of the BBSome complex which would constitute a coat complex required for sorting of specific membrane proteins to the primary cilia. Together with BBS1, is necessary for correct trafficking of PKD1 to primary cilia. Together with the BBSome complex and LTZL1, controls SMO ciliary trafficking and contributes to the sonic hedgehog (SHH) pathway regulation. May regulate cilia assembly and disassembly and subsequent ciliary signaling events such as the Wnt signaling cascade. Isoform 2 may be required for proper retinal function and organization. The protein is ADP-ribosylation factor-like protein 6 (Arl6) of Mus musculus (Mouse).